Here is a 78-residue protein sequence, read N- to C-terminus: Large ribosomal subunit protein bL28 (78 aa).

The tract at residues 1–22 is disordered; sequence MAKVCQVTGKRPVTGHNVSHAK.

This sequence belongs to the bacterial ribosomal protein bL28 family.

In Saccharophagus degradans (strain 2-40 / ATCC 43961 / DSM 17024), this protein is Large ribosomal subunit protein bL28.